Reading from the N-terminus, the 298-residue chain is Ribosomal RNA small subunit methyltransferase H (298 aa).

Residues 31–33 (GGH), Asp-50, Tyr-80, Asp-95, and Gln-102 each bind S-adenosyl-L-methionine. Positions 255–298 (AEKDLYGNTNKPFKSVGKAIDPDDEEKERNNRARSARLRIAERE) are disordered.

It belongs to the methyltransferase superfamily. RsmH family.

The protein localises to the cytoplasm. The enzyme catalyses cytidine(1402) in 16S rRNA + S-adenosyl-L-methionine = N(4)-methylcytidine(1402) in 16S rRNA + S-adenosyl-L-homocysteine + H(+). Its function is as follows. Specifically methylates the N4 position of cytidine in position 1402 (C1402) of 16S rRNA. The chain is Ribosomal RNA small subunit methyltransferase H from Cytophaga hutchinsonii (strain ATCC 33406 / DSM 1761 / CIP 103989 / NBRC 15051 / NCIMB 9469 / D465).